The sequence spans 196 residues: MPLKSPFYDSSDNLIHDGWLLLRASNTPCTVLRPEIRSRFLLLSLQKPSADESPDNDKELSSNPDSGKKRKRRVLFSKAQTYELERRFRQQRYLSAPEREHLASLIRLTPTQVKIWFQNHRYKMKRARSEKGMEVTPLPSPRRVAVPVLVRDGKPCHTLKAQDFNPATFPTGIPFSAYSAQSLHHMQYNAQFLFYH.

The tract at residues proline 48–arginine 72 is disordered. The homeobox DNA-binding region spans lysine 69–arginine 128.

It belongs to the NK-2 homeobox family. In terms of tissue distribution, forebrain and midbrain.

It is found in the nucleus. Defines dorsal-ventral domains in developing brain. May play a role in defining positional information along the anterior-posterior (a/p) axis and the dorsal-ventral (d/v) axis of the developing nervous system. May be involved in determining positional or boundary information rather than determining a given cell type. The polypeptide is Homeobox protein XENK-2 (Xenopus laevis (African clawed frog)).